Consider the following 440-residue polypeptide: L-gulonolactone oxidase (440 aa).

The region spanning 17–187 is the FAD-binding PCMH-type domain; the sequence is YGCSPEMYYQ…LTVTLQCVPQ (171 aa). Histidine 54 carries the post-translational modification Pros-8alpha-FAD histidine. A helical membrane pass occupies residues 251–273; sequence IGFYLLEFLLWTSTYLPRLVGWI.

Belongs to the oxygen-dependent FAD-linked oxidoreductase family. FAD is required as a cofactor. Highly expressed in liver.

Its subcellular location is the microsome membrane. The protein localises to the endoplasmic reticulum membrane. The enzyme catalyses L-gulono-1,4-lactone + O2 = L-ascorbate + H2O2 + H(+). It participates in cofactor biosynthesis; L-ascorbate biosynthesis via UDP-alpha-D-glucuronate pathway; L-ascorbate from UDP-alpha-D-glucuronate: step 4/4. Oxidizes L-gulono-1,4-lactone to hydrogen peroxide and L-xylo-hexulonolactone which spontaneously isomerizes to L-ascorbate. The polypeptide is L-gulonolactone oxidase (Gulo) (Mus musculus (Mouse)).